The primary structure comprises 314 residues: Dioxygenase easH (314 aa).

H141, D143, and H217 together coordinate Fe cation.

This sequence belongs to the PhyH family. In terms of assembly, homodimer. Fe cation serves as cofactor.

It functions in the pathway alkaloid biosynthesis; ergot alkaloid biosynthesis. Its function is as follows. Dioxygenase; part of the gene cluster that mediates the biosynthesis of fungal ergot alkaloid. DmaW catalyzes the first step of ergot alkaloid biosynthesis by condensing dimethylallyl diphosphate (DMAP) and tryptophan to form 4-dimethylallyl-L-tryptophan. The second step is catalyzed by the methyltransferase easF that methylates 4-dimethylallyl-L-tryptophan in the presence of S-adenosyl-L-methionine, resulting in the formation of 4-dimethylallyl-L-abrine. The catalase easC and the FAD-dependent oxidoreductase easE then transform 4-dimethylallyl-L-abrine to chanoclavine-I which is further oxidized by easD in the presence of NAD(+), resulting in the formation of chanoclavine-I aldehyde. Agroclavine dehydrogenase easG then mediates the conversion of chanoclavine-I aldehyde to agroclavine via a non-enzymatic adduct reaction: the substrate is an iminium intermediate that is formed spontaneously from chanoclavine-I aldehyde in the presence of glutathione. The presence of easA is not required to complete this reaction. Further conversion of agroclavine to paspalic acid is a two-step process involving oxidation of agroclavine to elymoclavine and of elymoclavine to paspalic acid, the second step being performed by the elymoclavine oxidase cloA. Paspalic acid is then further converted to D-lysergic acid. Ergopeptines are assembled from D-lysergic acid and three different amino acids by the D-lysergyl-peptide-synthetases composed each of a monomudular and a trimodular nonribosomal peptide synthetase subunit. LpsB and lpsC encode the monomodular subunits responsible for D-lysergic acid activation and incorporation into the ergopeptine backbone. LpsA1 and A2 subunits encode the trimodular nonribosomal peptide synthetase assembling the tripeptide portion of ergopeptines. LpsA1 is responsible for formation of the major ergopeptine, ergotamine, and lpsA2 for alpha-ergocryptine, the minor ergopeptine of the total alkaloid mixture elaborated by C.purpurea. D-lysergyl-tripeptides are assembled by the nonribosomal peptide synthetases and released as N-(D-lysergyl-aminoacyl)-lactams. Cyclolization of the D-lysergyl-tripeptides is performed by the Fe(2+)/2-ketoglutarate-dependent dioxygenase easH which introduces a hydroxyl group into N-(D-lysergyl-aminoacyl)-lactam at alpha-C of the aminoacyl residue followed by spontaneous condensation with the terminal lactam carbonyl group. This chain is Dioxygenase easH, found in Claviceps purpurea (strain 20.1) (Ergot fungus).